The chain runs to 430 residues: Adenylosuccinate synthetase (430 aa).

GTP contacts are provided by residues 12–18 (GDEGKGK) and 40–42 (GHT). Asp-13 acts as the Proton acceptor in catalysis. Mg(2+) contacts are provided by Asp-13 and Gly-40. IMP-binding positions include 13–16 (DEGK), 38–41 (NAGH), Thr-130, Arg-144, Gln-224, and Thr-239. His-41 functions as the Proton donor in the catalytic mechanism. A disordered region spans residues 277-297 (PFPTEQDNETGRKIGERGREF). Positions 285–296 (ETGRKIGERGRE) are enriched in basic and acidic residues. 299-305 (TNTGRPR) lines the substrate pocket. Arg-303 provides a ligand contact to IMP. Residues Arg-305, 331 to 333 (KLD), and 413 to 415 (STS) each bind GTP.

Belongs to the adenylosuccinate synthetase family. Homodimer. It depends on Mg(2+) as a cofactor.

The protein localises to the cytoplasm. It carries out the reaction IMP + L-aspartate + GTP = N(6)-(1,2-dicarboxyethyl)-AMP + GDP + phosphate + 2 H(+). Its pathway is purine metabolism; AMP biosynthesis via de novo pathway; AMP from IMP: step 1/2. Functionally, plays an important role in the de novo pathway of purine nucleotide biosynthesis. Catalyzes the first committed step in the biosynthesis of AMP from IMP. The chain is Adenylosuccinate synthetase from Bradyrhizobium sp. (strain ORS 278).